We begin with the raw amino-acid sequence, 163 residues long: Jun dimerization protein 2 (163 aa).

Disordered regions lie at residues 1–20 (MMPGQIPDPSVTAGSLPGLG) and 59–89 (KRPQPVKSELDEEEERRKRRREKNKVAAARC). A Glycyl lysine isopeptide (Lys-Gly) (interchain with G-Cter in SUMO2) cross-link involves residue Lys65. In terms of domain architecture, bZIP spans 72–135 (EERRKRRREK…QQLILMLNRH (64 aa)). Residues 74–96 (RRKRRREKNKVAAARCRNKKKER) are basic motif. The interval 100–128 (LQRESERLELMNAELKTQIEELKLERQQL) is leucine-zipper. Thr148 is subject to Phosphothreonine; by MAPK8.

Belongs to the bZIP family. ATF subfamily. In terms of assembly, forms a homodimer or heterodimer with JUN, JUNB, JUND, CEBPG and ATF2 thereby inhibiting transactivation by JUN, ATF2 and CEBPG. Binds multiple DNA elements such as cAMP-response element (CRE) and TPA response element (TRE) either as homodimer or heterodimer. Interacts with IRF2BP1. Post-translationally, phosphorylation of Thr-148 by MAPK8 in response to different stress conditions such as, UV irradiation, oxidatives stress and anisomycin treatments. In terms of processing, polyubiquitinated; probably by IRF2BP1. Ubiquitously expressed in all adult tissues tested as well in embryos.

It localises to the nucleus. In terms of biological role, component of the AP-1 transcription factor that represses transactivation mediated by the Jun family of proteins. Involved in a variety of transcriptional responses associated with AP-1, such as UV-induced apoptosis, cell differentiation, tumorigenesis and antitumogeneris. Can also function as a repressor by recruiting histone deacetylase 3/HDAC3 to the promoter region of JUN. May control transcription via direct regulation of the modification of histones and the assembly of chromatin. The polypeptide is Jun dimerization protein 2 (Jdp2) (Mus musculus (Mouse)).